A 460-amino-acid polypeptide reads, in one-letter code: MLLRFYFNGLLFVGCLLSWGRSDTEEQCHTFTDLNIHNSIIGTGLKVQLLLYTRENPKCAQDLNVDNSTGFQYLNVTRRTVFITHGYRPTGSPPVWIDDIVKKFLDIQDFNVIVVDWNRGATTVLYHNAAANTRKVADILKRFIDNMLSQGATLDSIYMVGVSLGAHISGFVGKMYNGSIGRITGLDPAGPLFNGKPPEERLHYTDAQFVDVVHSDTDGLGYKESLGHIDFYPNGGTDQPGCPKTILAGSEYFKCDHQRSVFLYIASLTKSCDLVAFPCKSYRDYRIGNCTDCKEFLPLSCPVLGFYADKWKDHLVKRNHPGTTAFFDTAAKDPYCIFHYYLDFMTWSSQIRRGYITIKLTSLDGNVTESKLDKDAAVFEQYKEESLLAKFDQDMDPISRISVTFTTGSVIGPKYKLRVLRMRLRPFTNRNRPILCRYDFVLLENIETEFIPIPCEDTNL.

The N-terminal stretch at 1–24 (MLLRFYFNGLLFVGCLLSWGRSDT) is a signal peptide. N-linked (GlcNAc...) asparagine glycosylation is found at asparagine 67 and asparagine 75. The Nucleophile role is filled by serine 163. Asparagine 177 is a glycosylation site (N-linked (GlcNAc...) asparagine). The active-site Charge relay system is aspartate 187. Cysteine 242 and cysteine 255 are joined by a disulfide. The active-site Charge relay system is the histidine 257. Cystine bridges form between cysteine 279–cysteine 290 and cysteine 293–cysteine 301. Asparagine 289 carries an N-linked (GlcNAc...) asparagine glycan. A glycan (N-linked (GlcNAc...) asparagine) is linked at asparagine 366. A disulfide bond links cysteine 436 and cysteine 455.

It belongs to the AB hydrolase superfamily. Lipase family.

It is found in the secreted. It localises to the cell membrane. The enzyme catalyses 1-hexadecanoyl-2-(9Z-octadecenoyl)-sn-glycero-3-phosphate + H2O = 2-(9Z-octadecenoyl)-sn-glycero-3-phosphate + hexadecanoate + H(+). Hydrolyzes specifically phosphatidic acid (PA) to produce 2-acyl lysophosphatidic acid (LPA; a potent bioactive lipid mediator) and fatty acid. Does not hydrolyze other phospholipids, like phosphatidylserine (PS), phosphatidylcholine (PC) and phosphatidylethanolamine (PE) or triacylglycerol (TG). The chain is Lipase member H (liph) from Xenopus tropicalis (Western clawed frog).